Here is a 557-residue protein sequence, read N- to C-terminus: Glypican-1 (557 aa).

The N-terminal stretch at 1-23 is a signal peptide; the sequence is MELRTRGWWLLCAAAALVVCARG. Cystine bridges form between Cys-32–Cys-68, Cys-62–Cys-255, Cys-69–Cys-258, Cys-190–Cys-342, Cys-245–Cys-278, Cys-267–Cys-414, and Cys-271–Cys-400. Residues Asn-79 and Asn-116 are each glycosylated (N-linked (GlcNAc...) asparagine). Residues 477 to 531 form a disordered region; the sequence is FQDASDDGSGSGSGGGCPDDTCGRRVSKKSSSSRTPLTHALPGLSEQEGQKTSAA. O-linked (Xyl...) (heparan sulfate) serine glycans are attached at residues Ser-485, Ser-487, and Ser-489. Ser-529 carries GPI-anchor amidated serine lipidation. Positions 530–557 are cleaved as a propeptide — removed in mature form; it reads AATCPEPHSFFLLFLVTLVLAAARPRWR.

Belongs to the glypican family. In terms of processing, S-nitrosylated in a Cu(2+)-dependent manner. Nitric acid (NO) is released from the nitrosylated cysteines by ascorbate or by some other reducing agent, in a Cu(2+) or Zn(2+) dependent manner. This free nitric oxide is then capable of cleaving the heparan sulfate side chains. Post-translationally, N- and O-glycosylated. N-glycosylation is mainly of the complex type containing sialic acid. O-glycosylated with heparan sulfate. The heparan sulfate chains can be cleaved either by the action of heparanase or, degraded by a deaminative process that uses nitric oxide (NO) released from the S-nitrosylated cysteines. This process is triggered by ascorbate, or by some other reducing agent, in a Cu(2+)- or Zn(2+) dependent manner. Cu(2+) ions are provided by ceruloproteins such as APP, PRNP or CP which associate with GCP1 in intracellular compartments or lipid rafts. This cell-associated glypican is further processed to give rise to a medium-released species.

The protein resides in the cell membrane. It is found in the endosome. The protein localises to the secreted. It localises to the extracellular space. Cell surface proteoglycan that bears heparan sulfate. Binds, via the heparan sulfate side chains, alpha-4 (V) collagen and participates in Schwann cell myelination. May act as a catalyst in increasing the rate of conversion of prion protein PRPN(C) to PRNP(Sc) via associating (via the heparan sulfate side chains) with both forms of PRPN, targeting them to lipid rafts and facilitating their interaction. Required for proper skeletal muscle differentiation by sequestering FGF2 in lipid rafts preventing its binding to receptors (FGFRs) and inhibiting the FGF-mediated signaling. Binds Cu(2+) or Zn(2+) ions. The protein is Glypican-1 (Gpc1) of Mus musculus (Mouse).